Consider the following 557-residue polypeptide: MAPRRRRHTRIAGLRVVGTATLVAATTLTACSGSAAAQIDYVVDGALVTYNTNTVIGAASAGAQAFARTLTGFGYHGPDGQVVADRDFGTVSVVEGSPLILDYQISDDAVYSDGRPVTCDDLVLAWAAQSGRFPGFDAATQAGYVDIANIECTAGQKKARVSFIPDRSVVDHSQLFTATSLMPSHVIADQLHIDVTAALLSNNVSAVEQIARLWNSTWDLKPGRSHDEVRSRFPSSGPYKIESVLDDGAVVLVANDRWWGTKAITKRITVWPQGADIQDRVNNRSVDVVDVAAGSSGSLVTPDSYQRTDYPSAGIEQLIFAPQGSLAQSRTRRALALCVPRDAIARDAGVPIANSRLSPATDDALTDADGAAEARQFGRVDPAAARDALGGTPLTVRIGYGRPNARLAATIGTIADACAPAGITVSDVTVDTPGPQALRDGKIDVLLASTGGATGSGSSGSCAMDAYDLHSGNGNNLSGYANAQIDGIISALAVSADPAERARLLAEAAPVLWDEMPTLPLYRQQRTLLMSTKMYAVSRNPTRWGAGWNMDRWALAR.

A signal peptide spans 1-30 (MAPRRRRHTRIAGLRVVGTATLVAATTLTA). C31 carries N-palmitoyl cysteine lipidation. The S-diacylglycerol cysteine moiety is linked to residue C31.

To M.bovis Mb2616c and M.leprae ML0489.

It is found in the cell membrane. This is an uncharacterized protein from Mycobacterium tuberculosis (strain ATCC 25618 / H37Rv).